A 119-amino-acid chain; its full sequence is uncharacterized protein (119 aa).

A disulfide bridge connects residues cysteine 9 and cysteine 12.

It belongs to the ArsC family.

This is an uncharacterized protein from Streptomyces viridochromogenes.